Here is a 363-residue protein sequence, read N- to C-terminus: Probable iron/ascorbate oxidoreductase DDB_G0283291 (363 aa).

Residues 197 to 306 (IFNYPSIISS…RISFPLFFDP (110 aa)) enclose the Fe2OG dioxygenase domain. Positions 230, 232, and 286 each coordinate Fe cation. Arg-297 serves as a coordination point for 2-oxoglutarate.

The protein belongs to the iron/ascorbate-dependent oxidoreductase family. Fe(2+) serves as cofactor.

The polypeptide is Probable iron/ascorbate oxidoreductase DDB_G0283291 (Dictyostelium discoideum (Social amoeba)).